Here is a 331-residue protein sequence, read N- to C-terminus: Neuropeptides B/W receptor type 1 (331 aa).

Residues 1 to 43 lie on the Extracellular side of the membrane; it reads MHNASYWGPERANTSCPAPAPTLGCPNASGPAPPLPPPLAVAV. Asn3, Asn13, and Asn27 each carry an N-linked (GlcNAc...) asparagine glycan. Residues 44–66 traverse the membrane as a helical segment; sequence PVVYAVICAVGLAGNSAVLFVLL. Over 67-75 the chain is Cytoplasmic; it reads RAPRRKTVT. Residues 76 to 100 form a helical membrane-spanning segment; the sequence is NLFILNLAVADELFTLVPPVNIADF. Residues 101 to 115 lie on the Extracellular side of the membrane; that stretch reads LLRRWPFGELLCKLV. Cys112 and Cys191 are joined by a disulfide. A helical transmembrane segment spans residues 116–135; the sequence is VAVDQYNTFSSLYFLTVMSA. Residues 136–160 are Cytoplasmic-facing; the sequence is DRYLVVLATAESRRVAGRTYGAARA. The helical transmembrane segment at 161-180 threads the bilayer; sequence VSLAVWGVATLVVLPFAVFA. Topologically, residues 181-205 are extracellular; it reads RLDEEQGRRQCVLVFPQPEALWWRA. Residues 206-227 form a helical membrane-spanning segment; the sequence is SRLYTLVLGFAIPVSTICVLYT. At 228–251 the chain is on the cytoplasmic side; sequence SLLCRLRAIRLDSHAKALDRAKKR. A helical transmembrane segment spans residues 252–276; the sequence is VTVLVVAILAVCLLVWTPYHLSTVV. Topologically, residues 277–286 are extracellular; sequence ALTTDLPQTP. Residues 287–301 traverse the membrane as a helical segment; that stretch reads LVIAVSYFITSLSYA. Residues 302–331 are Cytoplasmic-facing; it reads NSCLNPFLYAFLDDSFRRSLRQLLACRTTS.

It belongs to the G-protein coupled receptor 1 family.

Its subcellular location is the cell membrane. Interacts specifically with a number of opioid ligands. Receptor for neuropeptides B and W, which may be involved in neuroendocrine system regulation, food intake and the organization of other signals. The protein is Neuropeptides B/W receptor type 1 (NPBWR1) of Bos taurus (Bovine).